We begin with the raw amino-acid sequence, 409 residues long: Arginine biosynthesis bifunctional protein ArgJ (409 aa).

Positions 156, 182, 193, 280, 404, and 409 each coordinate substrate. Thr193 acts as the Nucleophile in catalysis.

It belongs to the ArgJ family. In terms of assembly, heterotetramer of two alpha and two beta chains.

It localises to the cytoplasm. It catalyses the reaction N(2)-acetyl-L-ornithine + L-glutamate = N-acetyl-L-glutamate + L-ornithine. The catalysed reaction is L-glutamate + acetyl-CoA = N-acetyl-L-glutamate + CoA + H(+). It functions in the pathway amino-acid biosynthesis; L-arginine biosynthesis; L-ornithine and N-acetyl-L-glutamate from L-glutamate and N(2)-acetyl-L-ornithine (cyclic): step 1/1. Its pathway is amino-acid biosynthesis; L-arginine biosynthesis; N(2)-acetyl-L-ornithine from L-glutamate: step 1/4. Functionally, catalyzes two activities which are involved in the cyclic version of arginine biosynthesis: the synthesis of N-acetylglutamate from glutamate and acetyl-CoA as the acetyl donor, and of ornithine by transacetylation between N(2)-acetylornithine and glutamate. The sequence is that of Arginine biosynthesis bifunctional protein ArgJ from Nitrosomonas europaea (strain ATCC 19718 / CIP 103999 / KCTC 2705 / NBRC 14298).